The chain runs to 387 residues: S-adenosylmethionine synthase (387 aa).

Position 15 (His15) interacts with ATP. Asp17 is a binding site for Mg(2+). Glu43 lines the K(+) pocket. Positions 56 and 99 each coordinate L-methionine. The segment at 99 to 109 (QSPDIAQGVNA) is flexible loop. Residues 166–168 (DAK), 232–233 (RF), Asp241, 247–248 (RK), Ala264, and Lys268 contribute to the ATP site. L-methionine is bound at residue Asp241. Position 272 (Lys272) interacts with L-methionine.

Belongs to the AdoMet synthase family. Homotetramer; dimer of dimers. Mg(2+) serves as cofactor. The cofactor is K(+).

Its subcellular location is the cytoplasm. It catalyses the reaction L-methionine + ATP + H2O = S-adenosyl-L-methionine + phosphate + diphosphate. The protein operates within amino-acid biosynthesis; S-adenosyl-L-methionine biosynthesis; S-adenosyl-L-methionine from L-methionine: step 1/1. Functionally, catalyzes the formation of S-adenosylmethionine (AdoMet) from methionine and ATP. The overall synthetic reaction is composed of two sequential steps, AdoMet formation and the subsequent tripolyphosphate hydrolysis which occurs prior to release of AdoMet from the enzyme. This is S-adenosylmethionine synthase from Dechloromonas aromatica (strain RCB).